Reading from the N-terminus, the 1710-residue chain is MKISIFILLLFISSMVIISVNAETETIQTNTACDCDDDCDDGNRWSTDMCSAGLLFGKYCTHTQICCDDENACTIDSCSKTSGCVHTPINVDDKNPCTIDSCIKGFISHTQISCDDKNACTIDSCDCSSGCQNKPMSCDDNNPCTVDSCNNSTGCRNTPISVDDNNPCTIDSCSKSTGVVHIPINVDDLNPCTIDACTKEGGVTHTPVNVDDNNKCTTDSCSLFTGITHTEICCDDNNACTDDSCSPSTGCVNTPISCDDKNPCTVDSCNNSTGCCYTPINVDDNNPCTIDACTKSTGVTHTPINVDDNNQCTTDSCTKEGGVTHTPVNTDDNNPCTVDSCSPFTGVSHTPINVDDNNKCTIDACTKEGGVTHTPVNTDDNNACTLDSCSPLTGVTHTPINCDDKKACTVDSCSNSTGCVNTPISCDDNNPCTVDTCDDSTGCCNTPINVDDNNPCTVDACTKSTGVTHTPVNVDDNNKCTIDACTKEGGVTHTPVNTDDNNACTLDNCSPLTGVTHTPINCDDKKACTVDSCSNSTGCVNTPISCDDNNPCTVDSCDDITGCCNTPINVDDNNPCTVDACTKSTGVTHTPVNVDDNNKCTIDACTKEGGVTHTPVNTDDNNACTLDSCSPSTGVSHTPINCDDSNPCTVDSCSNSTGCVNTPVNVDDNNPCTVDACTKSTGVTHTPVNVDDNNKCTIDACTKEGGVTHTPVNTDDNNACTIDSCSPSTGISHTPINCDDKKACTVDSCSNSTGCVNTPISCDDNNPCTVDSCDDLTGCCNTPINVDDNNPCTIDACTKSTGVTHTPVNVDDNNKCTIDTCTKEGGVTHTPVNTDDNNACTLDSCSPSTGVSHTPINCDDNNKCTVDSCSNSTGCVNTPINCDDSNPCTVDSCNNSTGCVNTPVNVDDNNPCTVDACTKSTGVTHTPVNVDDNNKCTIDACTKEGGVTHTPVNTDDNNACTIDACTKEGGVTHTPVNTDDNNACTLDSCSPSTGVSHTPINCDDSNPCTVDSCSNSTGCCNTPINVDDNNPCTVDSCTKPTGVTHTPVNVDDNNKCTIDACTKEGGVTHTPVNTDDNNACTLDSCSPSTGISHAPINCDDSNPCTIDSCNNSTGCCNTPINVDDNNPCTVDSCTKSGGVTHTPVNVDDNNKCTTDACTKEGGVTHTPISCDDNNACTIDSCSNSTGCVNTPISCDDRNPCTVDTCTKEKGCQHSPIDTDDSNKCTIDACSSTTGVTHTSINCDDNNACTFDSCSNSTGCVSTPISCDDKNPCTLDSCDKKTGCCNTPINVDDNDKCTTDSCTKEGGVTHTPISCDDNNACTTDSCSKSTGCVNKPISCDDSNPCTVDSCSNSTGCCNTPINVDDNNPCTTDSCTKSGGVTHTPVNVDDNNKCTTDSCTKEGGITHTPISCDDNNPCTLDSCSPTTGCVNKPMNVDDNDACTTDTCNKDGTITHTPINTDDNNKCTLDACSPKTGVTHTPINCDDGNKCTINSCSPSVGCISTPVSCPKPKDKCSISQCDSAKGCIEVPMNCTSDKCNEASCCDGVCTSKPISCPKPKNKCQVAKCDLIKGCTVSNVVCDDGNACTEDSCCSDTGKCQFEPIKLPKNKNKCIISKCDPIKGTITNSTVNCECDDLCNIGECCEDTGKCNYRQKDCDDNNPKTADSCDSKTGKCINKPYNVITSGSNLISGLIGGLIGGGTGGKGDCKTCKN.

The signal sequence occupies residues Met-1–Ala-22. Cys-rich CT repeat units lie at residues Asn-43 to Glu-70, Asn-71 to Lys-94, Asn-95 to Lys-117, Asn-118 to Asn-141, Asn-142 to Asn-165, Asn-166 to Leu-189, Asn-190 to Asn-213, Asn-214 to Asn-237, Asn-238 to Lys-261, Asn-262 to Asn-285, Asn-286 to Asn-309, Asn-310 to Asn-333, Asn-334 to Asn-357, Asn-358 to Asn-381, Asn-382 to Lys-405, Lys-406 to Asn-429, Asn-430 to Asn-453, Asn-454 to Asn-477, Asn-478 to Asn-501, Asn-502 to Lys-525, Lys-526 to Asn-549, Asn-550 to Asn-573, Asn-574 to Asn-597, Asn-598 to Asn-621, Asn-622 to Ser-645, Asn-646 to Asn-669, Asn-670 to Asn-693, Asn-694 to Asn-717, Asn-718 to Lys-741, Lys-742 to Asn-765, Asn-766 to Asn-789, Asn-790 to Asn-813, Asn-814 to Asn-837, Asn-838 to Asn-861, Asn-862 to Ser-885, Asn-886 to Asn-909, Asn-910 to Asn-933, Asn-934 to Asn-957, Asn-958 to Asn-981, Asn-982 to Ser-1005, Asn-1006 to Asn-1029, Asn-1030 to Asn-1053, Asn-1054 to Asn-1077, Asn-1078 to Ser-1101, Asn-1102 to Asn-1125, Asn-1126 to Asn-1149, Asn-1150 to Asn-1173, Asn-1174 to Arg-1197, Asn-1198 to Ser-1221, Asn-1222 to Asn-1245, Asn-1246 to Lys-1269, Asn-1270 to Asn-1293, Asp-1294 to Asn-1317, Asn-1318 to Ser-1341, Asn-1342 to Asn-1365, Asn-1366 to Asn-1389, Asn-1390 to Asn-1413, Asn-1414 to Asn-1437, Asp-1438 to Asn-1461, Asn-1462 to Gly-1485, Asn-1486 to Pro-1509, Asp-1511 to Asp-1534, Asn-1558 to Gly-1581, Asn-1582 to Asn-1606, Asn-1608 to Asp-1632, and Asn-1658 to Ser-1682. N-linked (GlcNAc...) asparagine glycans are attached at residues Asn-150 and Asn-151. N-linked (GlcNAc...) asparagine glycosylation is found at Asn-270 and Asn-271. Asn-415 carries an N-linked (GlcNAc...) asparagine glycan. Asn-535 carries an N-linked (GlcNAc...) asparagine glycan. An N-linked (GlcNAc...) asparagine glycan is attached at Asn-655. Asn-751 is a glycosylation site (N-linked (GlcNAc...) asparagine). 3 N-linked (GlcNAc...) asparagine glycosylation sites follow: Asn-871, Asn-894, and Asn-895. The N-linked (GlcNAc...) asparagine glycan is linked to Asn-1015. N-linked (GlcNAc...) asparagine glycosylation is found at Asn-1110 and Asn-1111. An N-linked (GlcNAc...) asparagine glycan is attached at Asn-1183. N-linked (GlcNAc...) asparagine glycosylation is present at Asn-1255. An N-linked (GlcNAc...) asparagine glycan is attached at Asn-1351. A glycan (N-linked (GlcNAc...) asparagine) is linked at Asn-1530. Asn-1624 is a glycosylation site (N-linked (GlcNAc...) asparagine).

The protein localises to the secreted. This Dictyostelium discoideum (Social amoeba) protein is Extracellular matrix protein A (ecmA).